Consider the following 501-residue polypeptide: Phase 2 flagellin (501 aa).

Belongs to the bacterial flagellin family.

The protein localises to the secreted. The protein resides in the bacterial flagellum. Functionally, flagellin is the subunit protein which polymerizes to form the filaments of bacterial flagella. This is Phase 2 flagellin (fljB) from Salmonella abortus-equi.